Here is a 333-residue protein sequence, read N- to C-terminus: Tetraacyldisaccharide 4'-kinase (333 aa).

55–62 (TAGGNGKT) is a binding site for ATP.

It belongs to the LpxK family.

It catalyses the reaction a lipid A disaccharide + ATP = a lipid IVA + ADP + H(+). Its pathway is glycolipid biosynthesis; lipid IV(A) biosynthesis; lipid IV(A) from (3R)-3-hydroxytetradecanoyl-[acyl-carrier-protein] and UDP-N-acetyl-alpha-D-glucosamine: step 6/6. Transfers the gamma-phosphate of ATP to the 4'-position of a tetraacyldisaccharide 1-phosphate intermediate (termed DS-1-P) to form tetraacyldisaccharide 1,4'-bis-phosphate (lipid IVA). The chain is Tetraacyldisaccharide 4'-kinase from Pectobacterium carotovorum subsp. carotovorum (strain PC1).